Reading from the N-terminus, the 483-residue chain is Probable glycine dehydrogenase (decarboxylating) subunit 2 (483 aa).

The interval 1–24 is disordered; that stretch reads MLIFDHSRPGRTAAAQLPATGGDL. An N6-(pyridoxal phosphate)lysine modification is found at K264.

It belongs to the GcvP family. C-terminal subunit subfamily. The glycine cleavage system is composed of four proteins: P, T, L and H. In this organism, the P 'protein' is a heterodimer of two subunits. Requires pyridoxal 5'-phosphate as cofactor.

The enzyme catalyses N(6)-[(R)-lipoyl]-L-lysyl-[glycine-cleavage complex H protein] + glycine + H(+) = N(6)-[(R)-S(8)-aminomethyldihydrolipoyl]-L-lysyl-[glycine-cleavage complex H protein] + CO2. In terms of biological role, the glycine cleavage system catalyzes the degradation of glycine. The P protein binds the alpha-amino group of glycine through its pyridoxal phosphate cofactor; CO(2) is released and the remaining methylamine moiety is then transferred to the lipoamide cofactor of the H protein. This is Probable glycine dehydrogenase (decarboxylating) subunit 2 from Thiobacillus denitrificans (strain ATCC 25259 / T1).